Consider the following 89-residue polypeptide: Snake venom serine protease rhinocerase (89 aa).

The Peptidase S1 domain maps to 1-89; it reads VIGGAECDIN…KVFDYIPWIK (89 aa). Residue Asp45 is the Charge relay system of the active site. A disulfide bridge links Cys64 with Cys69.

It belongs to the peptidase S1 family. Snake venom subfamily. Glycosylated. Expressed by the venom gland.

Its subcellular location is the secreted. Inhibited by PMSF. Not inhibited by benzamidine. Functionally, snake venom serine protease that cleaves fibrinogen alpha and beta chains (FGA and FGB), but not gamma chains. Exhibits fibrinolytic and kininogenolytic. Preferentially cleaves after Arg and Lys residues. This chain is Snake venom serine protease rhinocerase, found in Bitis rhinoceros (West African gaboon viper).